A 218-amino-acid polypeptide reads, in one-letter code: Probable nicotinate-nucleotide adenylyltransferase (218 aa).

It belongs to the NadD family.

The enzyme catalyses nicotinate beta-D-ribonucleotide + ATP + H(+) = deamido-NAD(+) + diphosphate. It functions in the pathway cofactor biosynthesis; NAD(+) biosynthesis; deamido-NAD(+) from nicotinate D-ribonucleotide: step 1/1. Functionally, catalyzes the reversible adenylation of nicotinate mononucleotide (NaMN) to nicotinic acid adenine dinucleotide (NaAD). The polypeptide is Probable nicotinate-nucleotide adenylyltransferase (Burkholderia lata (strain ATCC 17760 / DSM 23089 / LMG 22485 / NCIMB 9086 / R18194 / 383)).